The chain runs to 175 residues: ATP synthase subunit b 1 (175 aa).

A helical transmembrane segment spans residues 26–48; the sequence is IINLAIIIGVLYVYGSKFIGNIL.

Belongs to the ATPase B chain family. F-type ATPases have 2 components, F(1) - the catalytic core - and F(0) - the membrane proton channel. F(1) has five subunits: alpha(3), beta(3), gamma(1), delta(1), epsilon(1). F(0) has four main subunits: a(1), b(1), b'(1) and c(10-14). The alpha and beta chains form an alternating ring which encloses part of the gamma chain. F(1) is attached to F(0) by a central stalk formed by the gamma and epsilon chains, while a peripheral stalk is formed by the delta, b and b' chains.

The protein localises to the cellular thylakoid membrane. In terms of biological role, f(1)F(0) ATP synthase produces ATP from ADP in the presence of a proton or sodium gradient. F-type ATPases consist of two structural domains, F(1) containing the extramembraneous catalytic core and F(0) containing the membrane proton channel, linked together by a central stalk and a peripheral stalk. During catalysis, ATP synthesis in the catalytic domain of F(1) is coupled via a rotary mechanism of the central stalk subunits to proton translocation. Functionally, component of the F(0) channel, it forms part of the peripheral stalk, linking F(1) to F(0). The polypeptide is ATP synthase subunit b 1 (Picosynechococcus sp. (strain ATCC 27264 / PCC 7002 / PR-6) (Agmenellum quadruplicatum)).